The primary structure comprises 175 residues: tRNA (cytidine(56)-2'-O)-methyltransferase (175 aa).

L83 lines the S-adenosyl-L-methionine pocket.

It belongs to the aTrm56 family. As to quaternary structure, homodimer.

It is found in the cytoplasm. It carries out the reaction cytidine(56) in tRNA + S-adenosyl-L-methionine = 2'-O-methylcytidine(56) in tRNA + S-adenosyl-L-homocysteine + H(+). Functionally, specifically catalyzes the AdoMet-dependent 2'-O-ribose methylation of cytidine at position 56 in tRNAs. This Methanosphaera stadtmanae (strain ATCC 43021 / DSM 3091 / JCM 11832 / MCB-3) protein is tRNA (cytidine(56)-2'-O)-methyltransferase.